A 113-amino-acid chain; its full sequence is RING-box protein 2 (113 aa).

A disordered region spans residues 1 to 26; that stretch reads MADVEDGEEPCVLSSHSGSAGSKSGG. Alanine 2 is modified (N-acetylalanine). Positions 50, 53, 61, 64, 73, 80, 82, 85, 87, 88, 99, and 102 each coordinate Zn(2+). Residues 61-103 form an RING-type zinc finger; sequence CLRCQAENKQEDCVVVWGECNHSFHNCCMSLWVKQNNRCPLCQ.

Belongs to the RING-box family. As to quaternary structure, catalytic component of multiple cullin-5-RING E3 ubiquitin-protein ligase complexes (ECS complexes, also named CRL5 complexes) composed of CUL5, Elongin BC (ELOB and ELOC), RNF7/RBX2 and a variable SOCS box domain-containing protein as substrate-specific recognition component. Also interacts (with lower preference) with CUL1, CUL2, CUL3, CUL4A and CUL4B; additional evidence is however required to confirm this result in vivo. Interacts with UBE2F. Interacts with CSNK2B, the interaction is not affected by phosphorylation by CK2. May also interact with DCUN1D1, DCUN1D2, DCUN1D3, DCUN1D4 and DCUN1D5.

It is found in the cytoplasm. Its subcellular location is the nucleus. The enzyme catalyses S-ubiquitinyl-[E2 ubiquitin-conjugating enzyme]-L-cysteine + [acceptor protein]-L-lysine = [E2 ubiquitin-conjugating enzyme]-L-cysteine + N(6)-ubiquitinyl-[acceptor protein]-L-lysine.. It catalyses the reaction S-[NEDD8-protein]-yl-[E2 NEDD8-conjugating enzyme]-L-cysteine + [cullin]-L-lysine = [E2 NEDD8-conjugating enzyme]-L-cysteine + N(6)-[NEDD8-protein]-yl-[cullin]-L-lysine.. Its pathway is protein modification; protein ubiquitination. It participates in protein modification; protein neddylation. In terms of biological role, catalytic component of multiple cullin-5-RING E3 ubiquitin-protein ligase complexes (ECS complexes), which mediate the ubiquitination and subsequent proteasomal degradation of target proteins. It is thereby involved in various biological processes, such as cell cycle progression, signal transduction and transcription. The functional specificity of the E3 ubiquitin-protein ligase ECS complexes depend on the variable SOCS box-containing substrate recognition component. Within ECS complexes, RNF7/RBX2 recruits the E2 ubiquitination enzyme to the complex via its RING-type and brings it into close proximity to the substrate. Catalytic subunit of various SOCS-containing ECS complexes, such as the ECS(SOCS7) complex, that regulate reelin signaling by mediating ubiquitination and degradation of DAB1. The ECS(SOCS2) complex mediates the ubiquitination and subsequent proteasomal degradation of phosphorylated EPOR and GHR. Promotes ubiquitination and degradation of NF1, thereby regulating Ras protein signal transduction. As part of the ECS(ASB9) complex, catalyzes ubiquitination and degradation of CKB. The ECS(SPSB3) complex catalyzes ubiquitination of nuclear CGAS. As part of the ECS(RAB40C) complex, mediates ANKRD28 ubiquitination and degradation, thereby inhibiting protein phosphatase 6 (PP6) complex activity and focal adhesion assembly during cell migration. As part of some ECS complex, catalyzes 'Lys-11'-linked ubiquitination and degradation of BTRC. ECS complexes and ARIH2 collaborate in tandem to mediate ubiquitination of target proteins; ARIH2 mediating addition of the first ubiquitin on CRLs targets. Specifically catalyzes the neddylation of CUL5 via its interaction with UBE2F. Does not catalyze neddylation of other cullins (CUL1, CUL2, CUL3, CUL4A or CUL4B). May play a role in protecting cells from apoptosis induced by redox agents. The polypeptide is RING-box protein 2 (Mus musculus (Mouse)).